A 466-amino-acid chain; its full sequence is Histidine--tRNA ligase (466 aa).

This sequence belongs to the class-II aminoacyl-tRNA synthetase family. As to quaternary structure, homodimer.

It is found in the cytoplasm. The enzyme catalyses tRNA(His) + L-histidine + ATP = L-histidyl-tRNA(His) + AMP + diphosphate + H(+). This Bifidobacterium longum subsp. infantis (strain ATCC 15697 / DSM 20088 / JCM 1222 / NCTC 11817 / S12) protein is Histidine--tRNA ligase.